A 412-amino-acid chain; its full sequence is NF-kappa-B essential modulator (412 aa).

Residues 1 to 48 are disordered; sequence MSRHLWKNQLSEMVQPSGGPAEDQDMLGEESSLGKPAMLHLPSEQGTP. The segment at 1–197 is required for interaction with and ubiquitination by MARCHF2; that stretch reads MSRHLWKNQL…REVLQQQHSV (197 aa). Phosphoserine; by IKKB is present on residues serine 31 and serine 43. Residues 44–111 are interaction with CHUK/IKBKB; the sequence is EQGTPETLQR…KLVERLSLEK (68 aa). Residues 49-343 adopt a coiled-coil conformation; that stretch reads ETLQRCLEEN…NKLKVGCHES (295 aa). Serine 68 carries the phosphoserine modification. Phosphoserine; by ATM is present on serine 85. Residues lysine 111, lysine 139, lysine 143, lysine 226, and lysine 246 each participate in a glycyl lysine isopeptide (Lys-Gly) (interchain with G-Cter in ubiquitin) cross-link. An interaction with TANK region spans residues 150–250; the sequence is LGELQESQSR…YDSHIKSSKG (101 aa). The segment at 242-343 is ubiquitin-binding (UBAN); it reads DSHIKSSKGM…NKLKVGCHES (102 aa). The self-association stretch occupies residues 246-358; sequence KSSKGMQLED…MRKRHVETSQ (113 aa). The tract at residues 249 to 412 is required for interaction with TNFAIP3; the sequence is KGMQLEDLRQ…LQIHVMECIE (164 aa). Residue lysine 270 forms a Glycyl lysine isopeptide (Lys-Gly) (interchain with G-Cter in SUMO); alternate linkage. Lysine 270 is covalently cross-linked (Glycyl lysine isopeptide (Lys-Gly) (interchain with G-Cter in ubiquitin); alternate). Glycyl lysine isopeptide (Lys-Gly) (interchain with G-Cter in ubiquitin) cross-links involve residues lysine 276, lysine 278, lysine 285, and lysine 295. A Glycyl lysine isopeptide (Lys-Gly) (interchain with G-Cter in SUMO); alternate cross-link involves residue lysine 302. Residue lysine 302 forms a Glycyl lysine isopeptide (Lys-Gly) (interchain with G-Cter in ubiquitin); alternate linkage. Residues lysine 314 and lysine 319 each participate in a glycyl lysine isopeptide (Lys-Gly) (interchain with G-Cter in ubiquitin) cross-link. A leucine-zipper region spans residues 315–336; sequence LVERKELLQEQLEQLQREFNKL. Serine 369 is subject to Phosphoserine; by IKKB. The interval 375-412 is interaction with CYLD; that stretch reads SNQRRSPPEEPPDFCCPKCQYQAPDMDTLQIHVMECIE. Position 380 is a phosphoserine (serine 380). The CCHC NOA-type zinc finger occupies 382-412; the sequence is PEEPPDFCCPKCQYQAPDMDTLQIHVMECIE. Residue cysteine 390 coordinates Zn(2+). A Glycyl lysine isopeptide (Lys-Gly) (interchain with G-Cter in ubiquitin) cross-link involves residue lysine 392. Positions 393, 406, and 410 each coordinate Zn(2+).

As to quaternary structure, homodimer; disulfide-linked. Component of the I-kappa-B-kinase (IKK) core complex consisting of CHUK, IKBKB and IKBKG; probably four alpha/CHUK-beta/IKBKB dimers are associated with four gamma/IKBKG subunits. The IKK core complex seems to associate with regulatory or adapter proteins to form a IKK-signalosome holo-complex. The IKK complex associates with TERF2IP/RAP1, leading to promote IKK-mediated phosphorylation of RELA/p65. Part of a complex composed of NCOA2, NCOA3, CHUK/IKKA, IKBKB, IKBKG and CREBBP. Interacts with COPS3, CYLD, NALP2, TRPC4AP and PIDD1. Interacts with ATM; the complex is exported from the nucleus. Interacts with TRAF6. Interacts with IKBKE. Interacts with TANK; the interaction is enhanced by IKBKE and TBK1. Part of a ternary complex consisting of TANK, IKBKB and IKBKG. Interacts with ZFAND5. Interacts with RIPK2. Interacts with TNIP1 and TNFAIP3; TNIP1 facilitates the TNFAIP3-mediated de-ubiquitination of IKBKG. Interacts with TNFAIP3; the interaction is induced by TNF stimulation and by polyubiquitin. Binds (via UBAN region) polyubiquitin; binds both 'Lys-63'-linked and linear polyubiquitin, with higher affinity for linear ubiquitin. Interacts with NLRP10. Interacts with TANK; this interaction increases in response to DNA damage. Interacts with USP10; this interaction increases in response to DNA damage. Interacts with ZC3H12A; this interaction increases in response to DNA damage. Interacts with IFIT5; the interaction synergizes the recruitment of IKK to MAP3K7 and enhances IKK phosphorylation. Interacts with TRIM29; this interaction induces IKBKG/NEMO ubiquitination and proteolytic degradation. Interacts with TRIM13; this interaction leads to IKBKG/NEMO ubiquitination. Interacts with ARFIP2. Interacts with RIPK1. Interacts with (ubiquitinated) BCL10; interaction with polyubiquitinated BCL10 via both 'Lys-63'-linked and linear ubiquitin is required for TCR-induced NF-kappa-B activation. Interacts with MARCHF2; during the late stages of macrophage viral and bacterial infection; the interaction leads to ubiquitination and degradation of IKBKG/NEMO. Phosphorylation at Ser-68 attenuates aminoterminal homodimerization. Post-translationally, polyubiquitinated on Lys-278 via 'Lys-63'-linked ubiquitin; the ubiquitination is mediated downstream of NOD2 and RIPK2 and probably plays a role in signaling by facilitating interactions with ubiquitin domain-containing proteins and activates the NF-kappa-B pathway. Polyubiquitinated on Lys-278 and Lys-302 through 'Lys-63'-linked ubiquitin; the ubiquitination is mediated by BCL10, MALT1 and TRAF6 and probably plays a role in signaling by facilitating interactions with ubiquitin domain-containing proteins and activates the NF-kappa-B pathway. Monoubiquitinated on Lys-270 and Lys-302; promotes nuclear export. Polyubiquitinated through 'Lys-27' by TRIM23; involved in antiviral innate and inflammatory responses. Linear polyubiquitinated on Lys-111, Lys-143, Lys-226, Lys-246, Lys-270, Lys-278, Lys-285, Lys-295, Lys-302 and Lys-319; the head-to-tail polyubiquitination is mediated by the LUBAC complex and plays a key role in NF-kappa-B activation. Deubiquitinated by USP10 in a TANK-dependent and -independent manner, leading to the negative regulation of NF-kappa-B signaling upon DNA damage. Ubiquitinated at Lys-319 by MARCHF2 following bacterial and viral infection which leads to its degradation. Polyubiquitinated via 'Lys-29'-linked ubiquitin; leading to lysosomal degradation. In terms of processing, sumoylated on Lys-270 and Lys-302 with SUMO1; the modification results in phosphorylation of Ser-85 by ATM leading to a replacement of the sumoylation by mono-ubiquitination on these residues. Neddylated by TRIM40, resulting in stabilization of NFKBIA and down-regulation of NF-kappa-B activity.

The protein localises to the cytoplasm. Its subcellular location is the nucleus. Its function is as follows. Regulatory subunit of the IKK core complex which phosphorylates inhibitors of NF-kappa-B thus leading to the dissociation of the inhibitor/NF-kappa-B complex and ultimately the degradation of the inhibitor. Its binding to scaffolding polyubiquitin plays a key role in IKK activation by multiple signaling receptor pathways. Can recognize and bind both 'Lys-63'-linked and linear polyubiquitin upon cell stimulation, with a much highr affinity for linear polyubiquitin. Could be implicated in NF-kappa-B-mediated protection from cytokine toxicity. Essential for viral activation of IRF3. Involved in TLR3- and IFIH1-mediated antiviral innate response; this function requires 'Lys-27'-linked polyubiquitination. This chain is NF-kappa-B essential modulator (Ikbkg), found in Rattus norvegicus (Rat).